Here is a 510-residue protein sequence, read N- to C-terminus: ATP synthase subunit alpha (510 aa).

169–176 is a binding site for ATP; the sequence is GDRQTGKT.

It belongs to the ATPase alpha/beta chains family. F-type ATPases have 2 components, CF(1) - the catalytic core - and CF(0) - the membrane proton channel. CF(1) has five subunits: alpha(3), beta(3), gamma(1), delta(1), epsilon(1). CF(0) has three main subunits: a(1), b(2) and c(9-12). The alpha and beta chains form an alternating ring which encloses part of the gamma chain. CF(1) is attached to CF(0) by a central stalk formed by the gamma and epsilon chains, while a peripheral stalk is formed by the delta and b chains.

It is found in the cell inner membrane. The catalysed reaction is ATP + H2O + 4 H(+)(in) = ADP + phosphate + 5 H(+)(out). In terms of biological role, produces ATP from ADP in the presence of a proton gradient across the membrane. The alpha chain is a regulatory subunit. The sequence is that of ATP synthase subunit alpha from Azorhizobium caulinodans (strain ATCC 43989 / DSM 5975 / JCM 20966 / LMG 6465 / NBRC 14845 / NCIMB 13405 / ORS 571).